Reading from the N-terminus, the 564-residue chain is Kelch repeat and BTB domain-containing protein A55 (564 aa).

Residues Cys-21–Asn-88 form the BTB domain. 6 Kelch repeats span residues Ile-252 to Asn-297, Ile-298 to Glu-346, Tyr-347 to Gly-395, Ile-397 to Gly-441, Lys-442 to Asn-492, and Leu-494 to Ile-539.

Belongs to the poxviruses A55 protein family. Interacts (via BTB domain) with host CUL3.

The protein resides in the host cytoplasm. Probable substrate-specific adapter of CUL3-containing E3 ubiquitin-protein ligases which mediate the ubiquitination and subsequent proteasomal degradation of host target proteins. The sequence is that of Kelch repeat and BTB domain-containing protein A55 (KBTB1) from Bos taurus (Bovine).